Consider the following 157-residue polypeptide: Protein AE7 (157 aa).

Belongs to the MIP18 family. In terms of assembly, part of a complex formed of AE7, CIA1, MMS19 and NAR1. Interacts with CIA1 and MMS19, but not with NAR1. In terms of tissue distribution, expressed in the embryo, shoot apical meristem, leaf primordia, inflorescence and all floral organs.

It is found in the nucleus. Its subcellular location is the cytoplasm. In terms of biological role, central member of the cytosolic iron-sulfur (Fe-S) protein assembly (CIA) pathway. Involved in leaf polarity formation. Promotes leaf adaxial identity. May play a role in the cell cycle progression and is required for cell proliferation. This chain is Protein AE7, found in Arabidopsis thaliana (Mouse-ear cress).